We begin with the raw amino-acid sequence, 270 residues long: Methionine-rich protein (270 aa).

Residues Met-1–Ala-18 form the signal peptide. Positions Gln-31–Ser-52 are enriched in polar residues. The tract at residues Gln-31–Pro-95 is disordered. Low complexity predominate over residues Pro-56–Pro-95.

Component of the acid-soluble organic matrix of calcified layers of the shell (at protein level).

The protein resides in the secreted. The sequence is that of Methionine-rich protein from Lottia gigantea (Giant owl limpet).